A 339-amino-acid chain; its full sequence is MNKILLLILLESIVFLSCSGKGSLGSEIPKVSLIIDGTFDDKSFNESALNGVKKVKEEFKIELVLKESSSNSYLSDLEGLKDAGSDLIWLIGYRFSDVAKVAALQNPDMKYAIIDPIYSNDPIPANLVGMTFRAQEGAFLTGYIAAKLSKTGKIGFLGGIEGEIVDAFRYGYEAGAKYANKDIKISTQYIGSFADLEAGRSVATRMYSDEIDIIHHAAGLGGIGAIEVAKELGSGHYIIGVDEDQAYLAPDNVITSTTKDVGRALNIFTSNHLKTNTFEGGKLINYGLKEGVVGFVRNPKMISFELEKEIDNLSSKIINKEIIVPSNKESYEKFLKEFI.

The first 17 residues, 1-17, serve as a signal peptide directing secretion; that stretch reads MNKILLLILLESIVFLS. The N-palmitoyl cysteine moiety is linked to residue Cys18. A lipid anchor (S-diacylglycerol cysteine) is attached at Cys18.

This sequence belongs to the BMP lipoprotein family. Monomer.

The protein localises to the cell inner membrane. Functionally, immunogenic protein. May be part of an ABC-type nucleoside uptake system involved in the purine salvage pathway. This is Basic membrane protein A (bmpA) from Borreliella burgdorferi (strain ATCC 35210 / DSM 4680 / CIP 102532 / B31) (Borrelia burgdorferi).